We begin with the raw amino-acid sequence, 184 residues long: NADH-quinone oxidoreductase subunit B (184 aa).

4 residues coordinate [4Fe-4S] cluster: Cys37, Cys38, Cys103, and Cys132. The disordered stretch occupies residues 164–184 (HEREEAAKHALPTHSMKGLLR).

It belongs to the complex I 20 kDa subunit family. NDH-1 is composed of 14 different subunits. Subunits NuoB, C, D, E, F, and G constitute the peripheral sector of the complex. Requires [4Fe-4S] cluster as cofactor.

It localises to the cell membrane. The catalysed reaction is a quinone + NADH + 5 H(+)(in) = a quinol + NAD(+) + 4 H(+)(out). Functionally, NDH-1 shuttles electrons from NADH, via FMN and iron-sulfur (Fe-S) centers, to quinones in the respiratory chain. The immediate electron acceptor for the enzyme in this species is believed to be a menaquinone. Couples the redox reaction to proton translocation (for every two electrons transferred, four hydrogen ions are translocated across the cytoplasmic membrane), and thus conserves the redox energy in a proton gradient. This is NADH-quinone oxidoreductase subunit B from Acidothermus cellulolyticus (strain ATCC 43068 / DSM 8971 / 11B).